Here is a 111-residue protein sequence, read N- to C-terminus: Large ribosomal subunit protein uL22 (111 aa).

The protein belongs to the universal ribosomal protein uL22 family. Part of the 50S ribosomal subunit.

Its function is as follows. This protein binds specifically to 23S rRNA; its binding is stimulated by other ribosomal proteins, e.g. L4, L17, and L20. It is important during the early stages of 50S assembly. It makes multiple contacts with different domains of the 23S rRNA in the assembled 50S subunit and ribosome. Functionally, the globular domain of the protein is located near the polypeptide exit tunnel on the outside of the subunit, while an extended beta-hairpin is found that lines the wall of the exit tunnel in the center of the 70S ribosome. In Citrifermentans bemidjiense (strain ATCC BAA-1014 / DSM 16622 / JCM 12645 / Bem) (Geobacter bemidjiensis), this protein is Large ribosomal subunit protein uL22.